Reading from the N-terminus, the 430-residue chain is MGKNVVVLGTQWGDEGKGKIVDLLTEQAAAVVRYQGGHNAGHTLVIDGEKTVLHLIPSGILREGVQCLIGNGVVLAPDALLREITKLEEKGVPVRERLRISPSCPLILSYHVALDQAREKARGEAKIGTTGRGIGPAYEDKVARRGLRVGDLFHRERFAAKLGELLDYHNFVLQHYYKEPAIDFQKTLDEAMEYAELLKPMMADVAATLHDLRKHGKDIMFEGAQGSLLDIDHGTYPYVTSSNTTAGGTATGSGFGPLYLDYVLGITKAYTTRVGSGPFPTELFDDVGAYLAKRGHEFGATTGRARRCGWFDAVILRRAIEINSISGLCLTKLDVLDGLDVVRLCVGYRNADGDVLEAPTDADSYIGLQPVYEEMPGWSESTVGAKTLEELPANARAYIKRVEELVGAPIDIISTGPDRNETIILRHPFA.

GTP is bound by residues 13-19 and 41-43; these read GDEGKGK and GHT. D14 serves as the catalytic Proton acceptor. 2 residues coordinate Mg(2+): D14 and G41. IMP-binding positions include 14 to 17, 39 to 42, T130, R144, Q225, T240, and R304; these read DEGK and NAGH. The Proton donor role is filled by H42. 300–306 is a binding site for substrate; the sequence is ATTGRAR. GTP contacts are provided by residues R306, 332-334, and 414-416; these read KLD and STG.

Belongs to the adenylosuccinate synthetase family. Homodimer. The cofactor is Mg(2+).

It localises to the cytoplasm. The catalysed reaction is IMP + L-aspartate + GTP = N(6)-(1,2-dicarboxyethyl)-AMP + GDP + phosphate + 2 H(+). It functions in the pathway purine metabolism; AMP biosynthesis via de novo pathway; AMP from IMP: step 1/2. Its function is as follows. Plays an important role in the de novo pathway of purine nucleotide biosynthesis. Catalyzes the first committed step in the biosynthesis of AMP from IMP. This Pseudomonas paraeruginosa (strain DSM 24068 / PA7) (Pseudomonas aeruginosa (strain PA7)) protein is Adenylosuccinate synthetase.